A 348-amino-acid polypeptide reads, in one-letter code: Histidinol-phosphate aminotransferase (348 aa).

K210 is subject to N6-(pyridoxal phosphate)lysine.

This sequence belongs to the class-II pyridoxal-phosphate-dependent aminotransferase family. Histidinol-phosphate aminotransferase subfamily. As to quaternary structure, homodimer. The cofactor is pyridoxal 5'-phosphate.

The catalysed reaction is L-histidinol phosphate + 2-oxoglutarate = 3-(imidazol-4-yl)-2-oxopropyl phosphate + L-glutamate. The protein operates within amino-acid biosynthesis; L-histidine biosynthesis; L-histidine from 5-phospho-alpha-D-ribose 1-diphosphate: step 7/9. The sequence is that of Histidinol-phosphate aminotransferase from Cytophaga hutchinsonii (strain ATCC 33406 / DSM 1761 / CIP 103989 / NBRC 15051 / NCIMB 9469 / D465).